Reading from the N-terminus, the 238-residue chain is Probable transcriptional regulatory protein Sde_1551 (238 aa).

The protein belongs to the TACO1 family.

The protein localises to the cytoplasm. The chain is Probable transcriptional regulatory protein Sde_1551 from Saccharophagus degradans (strain 2-40 / ATCC 43961 / DSM 17024).